Consider the following 61-residue polypeptide: Small ribosomal subunit protein uS14 (61 aa).

Zn(2+)-binding residues include cysteine 24, cysteine 27, cysteine 40, and cysteine 43.

It belongs to the universal ribosomal protein uS14 family. Zinc-binding uS14 subfamily. In terms of assembly, part of the 30S ribosomal subunit. Contacts proteins S3 and S10. It depends on Zn(2+) as a cofactor.

Its function is as follows. Binds 16S rRNA, required for the assembly of 30S particles and may also be responsible for determining the conformation of the 16S rRNA at the A site. In Streptococcus thermophilus (strain ATCC BAA-491 / LMD-9), this protein is Small ribosomal subunit protein uS14.